The following is a 705-amino-acid chain: Kinesin-like protein KIF2A (705 aa).

The segment at 1 to 216 (MATANFGKIQ…LDYRPLTTAD (216 aa)) is globular. A disordered region spans residues 65-186 (DLVPDEDIEP…QELREKRAQD (122 aa)). Residue Ser75 is modified to Phosphoserine. A Phosphothreonine modification is found at Thr96. The residue at position 101 (Lys101) is an N6-acetyllysine. The span at 122-139 (LPEQSSSAQQNGSVSDIS) shows a compositional bias: polar residues. A phosphoserine mark is found at Ser134 and Ser139. Residues 158 to 186 (CVKEVEKLQEKREKRRLQQQELREKRAQD) are compositionally biased toward basic and acidic residues. Residues 222–552 (RICVCVRKRP…LRYANRVKEL (331 aa)) form the Kinesin motor domain. Position 312–319 (312–319 (GQTGSGKT)) interacts with ATP. Residues Thr528 and Tyr545 each carry the phosphoserine modification. Residues 659-698 (ATQLEAILEQKIDILTELRDKVKSFRAALQEEEQASKQIN) are a coiled coil.

This sequence belongs to the TRAFAC class myosin-kinesin ATPase superfamily. Kinesin family. MCAK/KIF2 subfamily. In terms of assembly, interacts with AURKA and PLK1. Interacts with PSRC1. Interacts with MCRS1; the interaction enhances recruitment of KIF2A to the minus ends of spindle microtubules which promotes chromosome alignment. In terms of tissue distribution, highest level in lung. High level in ovary, moderate levels in heart, kidney, placenta, skeletal muscle and spleen (at protein level). Pancreas and spleen express a shorter isoform (at protein level). Expressed in the flagellum of elongated spermatids and sperm in the testis lumen (at protein level). Isoform 1 expressed in neuronal cells. Isoform 2 expressed in astrocytes and fibroblasts.

It localises to the cytoplasm. Its subcellular location is the cytoskeleton. The protein localises to the microtubule organizing center. The protein resides in the centrosome. It is found in the spindle pole. It localises to the spindle. Its subcellular location is the lysosome. Its function is as follows. Plus end-directed microtubule-dependent motor required for normal brain development. May regulate microtubule dynamics during axonal growth. Required for normal progression through mitosis. Required for normal congress of chromosomes at the metaphase plate. Required for normal spindle dynamics during mitosis. Promotes spindle turnover. Implicated in formation of bipolar mitotic spindles. Has microtubule depolymerization activity. The chain is Kinesin-like protein KIF2A (Kif2a) from Mus musculus (Mouse).